The following is a 400-amino-acid chain: Enoyl-[acyl-carrier-protein] reductase [NADH] (400 aa).

Residues 48-53, 74-75, 111-112, and 139-140 each bind NAD(+); these read GSSSGY, FE, DA, and LA. Tyr225 is a substrate binding site. Tyr235 serves as the catalytic Proton donor. NAD(+) contacts are provided by residues Lys244 and 273–275; that span reads VVT.

It belongs to the TER reductase family. As to quaternary structure, monomer.

It catalyses the reaction a 2,3-saturated acyl-[ACP] + NAD(+) = a (2E)-enoyl-[ACP] + NADH + H(+). It participates in lipid metabolism; fatty acid biosynthesis. In terms of biological role, involved in the final reduction of the elongation cycle of fatty acid synthesis (FAS II). Catalyzes the reduction of a carbon-carbon double bond in an enoyl moiety that is covalently linked to an acyl carrier protein (ACP). This is Enoyl-[acyl-carrier-protein] reductase [NADH] from Aliivibrio salmonicida (strain LFI1238) (Vibrio salmonicida (strain LFI1238)).